Reading from the N-terminus, the 190-residue chain is Elongation factor P (190 aa).

Position 34 is an N6-(3,6-diaminohexanoyl)-5-hydroxylysine (Lys34).

This sequence belongs to the elongation factor P family. Post-translationally, may be beta-lysylated on the epsilon-amino group of Lys-34 by the combined action of EpmA and EpmB, and then hydroxylated on the C5 position of the same residue by EpmC (if this protein is present). Lysylation is critical for the stimulatory effect of EF-P on peptide-bond formation. The lysylation moiety may extend toward the peptidyltransferase center and stabilize the terminal 3-CCA end of the tRNA. Hydroxylation of the C5 position on Lys-34 may allow additional potential stabilizing hydrogen-bond interactions with the P-tRNA.

The protein localises to the cytoplasm. It functions in the pathway protein biosynthesis; polypeptide chain elongation. Involved in peptide bond synthesis. Alleviates ribosome stalling that occurs when 3 or more consecutive Pro residues or the sequence PPG is present in a protein, possibly by augmenting the peptidyl transferase activity of the ribosome. Modification of Lys-34 is required for alleviation. The chain is Elongation factor P from Psychrobacter arcticus (strain DSM 17307 / VKM B-2377 / 273-4).